A 170-amino-acid polypeptide reads, in one-letter code: MNVRMFSLMVGIFSVLNTTQFFIFDLNQKTHICYEAKFSIYVDSKSELVTWTLFHRANISTGLSLTTIIIGCFLFYCIHKNIYMGLLIYAMWIITYELINFSIVLLLNGIIKDHFKTLSYLHWIFQISHMLLHFFCLPFIVKHAYNLYKESQTVGRKRRHRLCSTIAVNS.

The first 21 residues, 1–21, serve as a signal peptide directing secretion; sequence MNVRMFSLMVGIFSVLNTTQF. Residues 22–58 are Lumenal-facing; sequence FIFDLNQKTHICYEAKFSIYVDSKSELVTWTLFHRAN. Residues 59-79 form a helical membrane-spanning segment; the sequence is ISTGLSLTTIIIGCFLFYCIH. At 80–85 the chain is on the cytoplasmic side; sequence KNIYMG. The chain crosses the membrane as a helical span at residues 86 to 106; it reads LLIYAMWIITYELINFSIVLL. Over 107–120 the chain is Lumenal; the sequence is LNGIIKDHFKTLSY. The helical transmembrane segment at 121–141 threads the bilayer; the sequence is LHWIFQISHMLLHFFCLPFIV. At 142–170 the chain is on the cytoplasmic side; that stretch reads KHAYNLYKESQTVGRKRRHRLCSTIAVNS.

The protein localises to the membrane. The protein is Transmembrane protein 217B of Homo sapiens (Human).